We begin with the raw amino-acid sequence, 852 residues long: Disrupted in schizophrenia 1 homolog (852 aa).

Disordered stretches follow at residues 1–86, 236–264, and 280–320; these read MQGG…GLDP, EAEP…PRHL, and QVTR…QGGG. Residues 1–294 are interaction with MAP1A; that stretch reads MQGGGPRGAP…SSRQSECGTV (294 aa). Over residues 65 to 79 the composition is skewed to polar residues; it reads AGLTGQQSQHSQSKA. The span at 253–263 shows a compositional bias: basic and acidic residues; the sequence is SSDRPHGDPRH. Residues 288–311 are compositionally biased toward low complexity; sequence QSECGTVSSSSSDTGFSSQDASSA. The segment at 295-693 is interaction with TRAF3IP1; that stretch reads SSSSSDTGFS…LGRVWKADLE (399 aa). Coiled-coil stretches lie at residues 367–397 and 449–496; these read EDGD…ALPS and ITRR…LLRW. Residues 437–594 form a required for localization to punctate cytoplasmic foci region; the sequence is LRTTAQDSLP…LLEAKMLALS (158 aa). The interval 443-852 is necessary and sufficient for interaction with PCNT and localization at the centrosome; it reads DSLPASITRR…PTAGAQETEA (410 aa). An interaction with ATF4 and ATF5 region spans residues 595 to 852; it reads GSCFSTAKEL…PTAGAQETEA (258 aa). Disordered regions lie at residues 706-746 and 833-852; these read EAGS…KSPL and KEAG…ETEA. An interaction with NDEL1 and PAFAH1B1 region spans residues 728-852; sequence TAALAVPRTP…PTAGAQETEA (125 aa). The tract at residues 728 to 852 is interaction with PAFAH1B1; it reads TAALAVPRTP…PTAGAQETEA (125 aa). The segment at 802 to 835 is interaction with NDEL1; it reads SHDEALFQSLQGELQTVKETLQAMILQLQPTKEA.

In terms of assembly, interacts with NDEL1. Interacts with CCDC88A (via C-terminus); the interaction is direct. Interacts with GSK3B. Interacts with tubulin alpha, ACTN2, ANKHD1, ATF4, ATF5, CEP63, EIF3S3, MAP1A, NDEL1, PAFAH1B1, RANBP9, SPTBN4, SYNE1 and TRAF3IP1. Interaction with microtubules may be mediated in part by TRAF3IP1. Interacts (via C-terminal) with PCNT. Interacts with CHCHD6. Interacts with CCDC141. Interacts with FBXW7, the substrate-recognition component of a SCF (SKP1-CUL1-F-box protein) E3 ubiquitin-protein ligase complex; the interaction targets DISC1 for proteasomal degradation. Interacts with ZNF365. Interacts with ATF4; inhibiting ATF4 transcription factor activity by disrupting ATF4 dimerization and DNA-binding. Interacts with PDE4B. Ubiquitinated. Ubiquitination with 'Lys-48'-linked polyubiquitin chains leads to its proteasomal degradation. In terms of tissue distribution, expressed in granule cell precursors within the dentate migratory stream during the first week of postnatal life and in differentiated granule cells of the hippocampus (at protein level). Detected in heart, brain, kidney, and testis. Expressed in dentate gyrus, hippocampus and in the olfactory bulb.

The protein localises to the cytoplasm. The protein resides in the cytoskeleton. It localises to the mitochondrion. Its subcellular location is the microtubule organizing center. It is found in the centrosome. The protein localises to the postsynaptic density. Functionally, involved in the regulation of multiple aspects of embryonic and adult neurogenesis. Required for neural progenitor proliferation in the ventrical/subventrical zone during embryonic brain development and in the adult dentate gyrus of the hippocampus. Participates in the Wnt-mediated neural progenitor proliferation as a positive regulator by modulating GSK3B activity and CTNNB1 abundance. Plays a role as a modulator of the AKT-mTOR signaling pathway controlling the tempo of the process of newborn neurons integration during adult neurogenesis, including neuron positioning, dendritic development and synapse formation. Inhibits the activation of AKT-mTOR signaling upon interaction with CCDC88A. Regulates the migration of early-born granule cell precursors toward the dentate gyrus during the hippocampal development. Inhibits ATF4 transcription factor activity in neurons by disrupting ATF4 dimerization and DNA-binding. Plays a role, together with PCNT, in the microtubule network formation. The protein is Disrupted in schizophrenia 1 homolog of Mus musculus (Mouse).